A 724-amino-acid chain; its full sequence is MDENKTKPAGKCPVMHGGNTATGSSNTDWWPNALNLDILHQHDTKTNPLGSDFSYRDALKTLDVDALKKDLHALMTDSQEWWPADWGHYGGLMIRMAWHSAGTYRTADGRGGGGTGNQRFAPLNSWPDNVSLDKARRLLWPIKKKYGNKLSWADLIILAGNIAYESMGLKTFGFAFGREDIWHPEKDIYWGSEKEWLAKSTGRYGSDDRTTLENPLAAVQMGLIYVNPEGVDGNPDPLRTAQDMRVTFSRMAMNDEETVALTAGGHTVGKTHGNGDASLLGKAPEGTDVGEQGLGWHNPTGSGKGRYTVTSGLEGAWTTHPTQWDNGFFHMLLNHEWELKKSPAGAWQWEPVFIKEEDKPVDVEDPSIRYNPMMTDADMALKVDPEYRKISERFYQDQAYFSEVFARAWFKLTHRDMGPKTRYLGPDVPQEDLLWQDPVPAGRTDYDVDVVKARIAESSLSISELVATAWDSARTFRGSDMRGGANGARIRLAPQKDWVGNEPERLARVLVVLENIAAATGASVADTIVLAGNVGIEKAAKAAGVNITVPFAPGRGDTTDALTDVESFDVLEPIHDGYRNWLKKDYAVSPEELMLDRTQLMGLTAKEMTVLVGGLRVLGTNYGGTKHGVFTDREGALTNDFFANLTDMKYTWKPYRKDLYEIRDRKTGEVKWTATRLDLVFGSNSILRSYAEVYAQDDNKEKFVNDFVAAWVKVMNADRFDLAE.

Residues 1-20 (MDENKTKPAGKCPVMHGGNT) form a disordered region. The segment at residues 98–225 (WHSAGTYRTA…LAAVQMGLIY (128 aa)) is a cross-link (tryptophyl-tyrosyl-methioninium (Trp-Tyr) (with M-251)). The active-site Proton acceptor is the histidine 99. The tryptophyl-tyrosyl-methioninium (Tyr-Met) (with W-98) cross-link spans 225 to 251 (YVNPEGVDGNPDPLRTAQDMRVTFSRM). Heme b is bound at residue histidine 266.

This sequence belongs to the peroxidase family. Peroxidase/catalase subfamily. Homodimer or homotetramer. It depends on heme b as a cofactor. Post-translationally, formation of the three residue Trp-Tyr-Met cross-link is important for the catalase, but not the peroxidase activity of the enzyme.

The catalysed reaction is H2O2 + AH2 = A + 2 H2O. It catalyses the reaction 2 H2O2 = O2 + 2 H2O. Bifunctional enzyme with both catalase and broad-spectrum peroxidase activity. In Pectobacterium carotovorum subsp. carotovorum (strain PC1), this protein is Catalase-peroxidase.